A 151-amino-acid polypeptide reads, in one-letter code: Probable transport accessory protein MmpS1 (151 aa).

The next 2 helical transmembrane spans lie at 8-28 (FWIP…VSRL) and 81-101 (VVNA…AVVA).

This sequence belongs to the MmpS family.

It is found in the cell membrane. This chain is Probable transport accessory protein MmpS1 (mmpS1), found in Mycobacterium tuberculosis (strain CDC 1551 / Oshkosh).